Reading from the N-terminus, the 194-residue chain is 3-isopropylmalate dehydratase small subunit (194 aa).

Belongs to the LeuD family. LeuD type 1 subfamily. As to quaternary structure, heterodimer of LeuC and LeuD.

It catalyses the reaction (2R,3S)-3-isopropylmalate = (2S)-2-isopropylmalate. Its pathway is amino-acid biosynthesis; L-leucine biosynthesis; L-leucine from 3-methyl-2-oxobutanoate: step 2/4. Catalyzes the isomerization between 2-isopropylmalate and 3-isopropylmalate, via the formation of 2-isopropylmaleate. This Anoxybacillus flavithermus (strain DSM 21510 / WK1) protein is 3-isopropylmalate dehydratase small subunit.